We begin with the raw amino-acid sequence, 123 residues long: ATP synthase epsilon chain (123 aa).

Belongs to the ATPase epsilon chain family. In terms of assembly, F-type ATPases have 2 components, CF(1) - the catalytic core - and CF(0) - the membrane proton channel. CF(1) has five subunits: alpha(3), beta(3), gamma(1), delta(1), epsilon(1). CF(0) has three main subunits: a, b and c.

It is found in the cell inner membrane. In terms of biological role, produces ATP from ADP in the presence of a proton gradient across the membrane. This chain is ATP synthase epsilon chain, found in Helicobacter pylori (strain HPAG1).